The sequence spans 306 residues: Pantothenate kinase (306 aa).

91 to 98 (GSVAVGKS) lines the ATP pocket.

This sequence belongs to the prokaryotic pantothenate kinase family.

Its subcellular location is the cytoplasm. It carries out the reaction (R)-pantothenate + ATP = (R)-4'-phosphopantothenate + ADP + H(+). The protein operates within cofactor biosynthesis; coenzyme A biosynthesis; CoA from (R)-pantothenate: step 1/5. In Streptococcus agalactiae serotype Ia (strain ATCC 27591 / A909 / CDC SS700), this protein is Pantothenate kinase.